The following is a 448-amino-acid chain: Methionine aminopeptidase 2-1 (448 aa).

Residues Met-1 to Phe-90 form a disordered region. Over residues Ala-22–Ala-33 the composition is skewed to low complexity. Acidic residues predominate over residues Gly-34–Asp-46. Positions Ala-47–Ala-58 are enriched in low complexity. Basic residues predominate over residues Ala-59–Gly-74. Over residues Ala-75–Ser-88 the composition is skewed to low complexity. His-198 lines the substrate pocket. Positions 218, 229, and 301 each coordinate a divalent metal cation. His-309 serves as a coordination point for substrate. Positions 334 and 429 each coordinate a divalent metal cation.

It belongs to the peptidase M24A family. Methionine aminopeptidase eukaryotic type 2 subfamily. Requires Co(2+) as cofactor. Zn(2+) is required as a cofactor. Mn(2+) serves as cofactor. It depends on Fe(2+) as a cofactor.

It is found in the cytoplasm. The enzyme catalyses Release of N-terminal amino acids, preferentially methionine, from peptides and arylamides.. Functionally, cotranslationally removes the N-terminal methionine from nascent proteins. The N-terminal methionine is often cleaved when the second residue in the primary sequence is small and uncharged (Met-Ala-, Cys, Gly, Pro, Ser, Thr, or Val). The chain is Methionine aminopeptidase 2-1 from Emericella nidulans (strain FGSC A4 / ATCC 38163 / CBS 112.46 / NRRL 194 / M139) (Aspergillus nidulans).